A 396-amino-acid polypeptide reads, in one-letter code: Acetate kinase (396 aa).

N8 is a binding site for Mg(2+). K15 provides a ligand contact to ATP. R89 contributes to the substrate binding site. D146 acts as the Proton donor/acceptor in catalysis. Residues 206–210 (HLGNG), 281–283 (DLR), and 329–333 (GIGEN) contribute to the ATP site. Residue E382 coordinates Mg(2+).

It belongs to the acetokinase family. Homodimer. Mg(2+) is required as a cofactor. Mn(2+) serves as cofactor.

The protein resides in the cytoplasm. The catalysed reaction is acetate + ATP = acetyl phosphate + ADP. Its pathway is metabolic intermediate biosynthesis; acetyl-CoA biosynthesis; acetyl-CoA from acetate: step 1/2. Its function is as follows. Catalyzes the formation of acetyl phosphate from acetate and ATP. Can also catalyze the reverse reaction. This Geobacillus kaustophilus (strain HTA426) protein is Acetate kinase.